Here is a 262-residue protein sequence, read N- to C-terminus: MTQPGRLTEVFDKCRAEERAALIGYLPNGYPDLDTSIELMTTLVRGGCDIIEVGIAYSDPMMDGPMIAAAAETALANGVRVADVFTTVRAITDAGGHAVVMSYWNPVLRYGVDAFARELAAAGGLGIITPDLIPDEADDWIAASDAHDLDRIFLVAPSSTPERLERTIGACRGFVYAASTMGVTGARDAVSNAAPALVSRVREVSDIAVGVGLGVRSGAQAAEIAAYADGVIVGSALVAAAPQGPAAVRSLAEELATGVRRA.

Residues glutamate 52 and aspartate 63 each act as proton acceptor in the active site.

It belongs to the TrpA family. In terms of assembly, tetramer of two alpha and two beta chains.

It carries out the reaction (1S,2R)-1-C-(indol-3-yl)glycerol 3-phosphate + L-serine = D-glyceraldehyde 3-phosphate + L-tryptophan + H2O. It participates in amino-acid biosynthesis; L-tryptophan biosynthesis; L-tryptophan from chorismate: step 5/5. Functionally, the alpha subunit is responsible for the aldol cleavage of indoleglycerol phosphate to indole and glyceraldehyde 3-phosphate. The protein is Tryptophan synthase alpha chain of Mycobacteroides abscessus (strain ATCC 19977 / DSM 44196 / CCUG 20993 / CIP 104536 / JCM 13569 / NCTC 13031 / TMC 1543 / L948) (Mycobacterium abscessus).